A 264-amino-acid chain; its full sequence is Small ribosomal subunit protein uS2 (264 aa).

The span at 243–253 (IEAAEDGEEVD) shows a compositional bias: acidic residues. The segment at 243 to 264 (IEAAEDGEEVDNAQLTSSQGRS) is disordered. Polar residues predominate over residues 255–264 (AQLTSSQGRS).

Belongs to the universal ribosomal protein uS2 family.

The sequence is that of Small ribosomal subunit protein uS2 from Deinococcus geothermalis (strain DSM 11300 / CIP 105573 / AG-3a).